A 408-amino-acid chain; its full sequence is Subtilisin-like protease 6 (408 aa).

The first 20 residues, methionine 1–glycine 20, serve as a signal peptide directing secretion. Residues alanine 21–isoleucine 123 constitute a propeptide that is removed on maturation. Positions lysine 36–lysine 119 constitute an Inhibitor I9 domain. In terms of domain architecture, Peptidase S8 spans serine 131–lysine 408. Residues aspartate 163 and histidine 194 each act as charge relay system in the active site. N-linked (GlcNAc...) asparagine glycosylation is found at asparagine 248, asparagine 260, and asparagine 345. The active-site Charge relay system is the serine 354. Residue asparagine 404 is glycosylated (N-linked (GlcNAc...) asparagine).

Belongs to the peptidase S8 family.

The protein localises to the secreted. Secreted subtilisin-like serine protease with keratinolytic activity that contributes to pathogenicity. The protein is Subtilisin-like protease 6 (SUB6) of Arthroderma gypseum (strain ATCC MYA-4604 / CBS 118893) (Microsporum gypseum).